A 1783-amino-acid polypeptide reads, in one-letter code: Trans-splicing factor Raa3, chloroplastic (1783 aa).

Residues 1-40 (MKADLATAKGSSPAFSAPRTYRARLLSRCLNKCFNTVLVS) constitute a chloroplast transit peptide. Disordered regions lie at residues 97–378 (ATTH…VGVN), 420–484 (ATSA…VAAQ), 563–610 (ARVG…SATK), 652–709 (STEP…SPAA), 918–971 (AAPT…QRAS), 1395–1427 (RDAK…QQHQ), 1476–1506 (PAPA…RRSR), and 1620–1639 (VKGR…DVQG). The segment covering 105–118 (DSGGQGPAAAGGRG) has biased composition (gly residues). Composition is skewed to low complexity over residues 126–157 (QAAA…PQRP), 186–205 (AVDA…PAPA), and 224–242 (AGKP…VGPQ). A compositionally biased stretch (basic and acidic residues) spans 256-273 (DESHMGLTHRDQGHDERI). A compositionally biased stretch (low complexity) spans 277-289 (AGEAWKAGAVAAP). Over residues 307-316 (LASSALGTHS) the composition is skewed to polar residues. Low complexity-rich tracts occupy residues 343–374 (SGSS…ITSN), 420–436 (ATSA…SSSS), 577–599 (RPVQ…SQPG), 655–669 (PLAA…ASAS), 676–709 (SSSN…SPAA), 928–970 (SAAA…PQRA), and 1403–1417 (QSAA…AAQD). Composition is skewed to basic residues over residues 1494–1506 (KSRR…RRSR) and 1620–1630 (VKGRGRGRRTA). In terms of domain architecture, RAP spans 1713–1772 (LAVGAAAGGAVIRNSRWLLSGAGALRRRLLTHAGWLVVPVRERQWKDLRSAEQQRRVVRE).

As to quaternary structure, part of a 1700 kDa complex that includes the precursor RNA to exon 1 and the tscA RNA.

The protein localises to the plastid. Its subcellular location is the chloroplast stroma. In terms of biological role, required for trans-splicing of exons 1 and 2 of the chloroplast encoded psaA mRNA (a group II intron). May be required for stability of the chloroplast RNA-protein complex in which it is found. This chain is Trans-splicing factor Raa3, chloroplastic (RAA3), found in Chlamydomonas reinhardtii (Chlamydomonas smithii).